We begin with the raw amino-acid sequence, 309 residues long: MINNRENMSVSERLISSRQNRQLDEVRGRMIVTACALIMIAASVAITIFLGVKGLQSFLVNGVSPIEFLTSLNWNPTDSDPKYGVLPFIFGSFAVTILSALIAAPLGIAGAIFMTEIAPNWGKKVLQPVIELLVGIPSVVYGFIGLTVLVPFIAQFKSSGTGHSLLAGTIVLSVMILPTITSISADAMASLPKSLREGSYALGATRWQTIRKVLVPAAFPTLMTAVVLGMARAFGEALAVQMVIGNTRVLPESPFDTAGTLTTIITLNMGHTTYGSVENNTLWSMGLVLLVMSFLFILLIRYLSSRRKV.

6 helical membrane-spanning segments follow: residues Met-30–Leu-50, Phe-88–Ile-108, Leu-133–Ile-153, Leu-165–Ala-185, Leu-214–Phe-234, and Asn-280–Ile-300. In terms of domain architecture, ABC transmembrane type-1 spans Ile-89–Ile-300.

This sequence belongs to the binding-protein-dependent transport system permease family. CysTW subfamily.

The protein resides in the cell membrane. Its function is as follows. Part of the binding-protein-dependent transport system YqgGHIJK. Probably responsible for the translocation of the substrate across the membrane. The chain is Probable ABC transporter permease protein YqgH (yqgH) from Bacillus subtilis (strain 168).